Reading from the N-terminus, the 1239-residue chain is Protein strawberry notch homolog 1 (1239 aa).

Residues 684-837 form a disordered region; the sequence is AQSNNNSPRD…SANSNTNSSF (154 aa). Basic and acidic residues predominate over residues 694–713; it reads SPCKENKIKKRKGEEVSREA. Acidic residues predominate over residues 728 to 744; the sequence is DESESESDASDNEESDN. The span at 778–790 shows a compositional bias: basic residues; that stretch reads KEHKKVKEKKKKK. Residues 814 to 837 show a composition bias toward low complexity; that stretch reads FTSTVGTTTSSTNASANSNTNSSF. Residues 838-866 are a coiled coil; the sequence is VTSQDAVERAQQMKKELLDKLEKLAEDLP.

This sequence belongs to the SBNO family.

It localises to the nucleus. Functionally, plays a crucial role in the regulation of neural stem cells (NSCs) proliferation. Enhances the phosphorylation of GSK3B through the PI3K-Akt signaling pathway, thereby upregulating the Wnt/beta-catenin signaling pathway and promoting the proliferation of NSCs. In Gallus gallus (Chicken), this protein is Protein strawberry notch homolog 1 (SBNO1).